The primary structure comprises 481 residues: MSLKALDYESLNENVKNCQYAVRGELYLRASELQKEGKKIIFTNVGNPHALGQKPLTFPRQVVSLCQAPFLLDDPNVGMIFPADAIARAKHYLSLTSGGLGAYSDSRGLPGVRKEVAEFIERRDGYPSDPELIFLTDGASKGVMQILNCVIRGQKDGILVPVPQYPLYSATISLLGGTLVPYYLEESENWGLDVNNLRQSVAQARSQGITVRAMVIINPGNPTGQCLSEANIREILRFCCDERLVLLGDEVYQQNIYQDERPFISSKKVLMDMGAPISKEVQLISFHTVSKGYWGECGQRGGYFEMTNIPPRTVEEIYKVASIALSPNVSAQIFMGLMVSPPKPGDISYDQFVRESKGILESLRRRARMMTDGFNSCKNVVCNFTEGAMYSFPQIKLPSKAIQAAKQAGKVPDVFYCLKLLEATGISTVPGSGFGQKEGVFHLRTTILPAEEEMPEIMDSFKKFNDEFMSQYADNFGYSRM.

Lysine 291 carries the post-translational modification N6-(pyridoxal phosphate)lysine. The Peroxisomal targeting signal signature appears at 479-481 (SRM).

It belongs to the class-I pyridoxal-phosphate-dependent aminotransferase family. Alanine aminotransferase subfamily. Homodimer. The cofactor is pyridoxal 5'-phosphate. The N-terminus is blocked. Expressed at low levels in seedlings, leaves, flowers, roots, and green siliques.

It is found in the peroxisome. The enzyme catalyses L-alanine + 2-oxoglutarate = pyruvate + L-glutamate. The catalysed reaction is glyoxylate + L-alanine = glycine + pyruvate. It catalyses the reaction glycine + 2-oxoglutarate = glyoxylate + L-glutamate. Its pathway is photosynthesis; C4 acid pathway. It functions in the pathway amino-acid degradation; L-alanine degradation via transaminase pathway; pyruvate from L-alanine: step 1/1. Its function is as follows. Catalyzes the Glu:glyoxylate aminotransferase (GGT), Ala:glyoxylate aminotransferase (AGT), Ala:2-oxoglutarate aminotransferase (AKT) and Glu:pyruvate aminotransferase (GPT) reactions in peroxisomes. This Arabidopsis thaliana (Mouse-ear cress) protein is Glutamate--glyoxylate aminotransferase 2 (GGAT2).